The primary structure comprises 219 residues: Elongation factor Ts (219 aa).

The segment at 82–85 is involved in Mg(2+) ion dislocation from EF-Tu; that stretch reads TDFV.

Belongs to the EF-Ts family.

It localises to the cytoplasm. Associates with the EF-Tu.GDP complex and induces the exchange of GDP to GTP. It remains bound to the aminoacyl-tRNA.EF-Tu.GTP complex up to the GTP hydrolysis stage on the ribosome. In Trichodesmium erythraeum (strain IMS101), this protein is Elongation factor Ts.